Reading from the N-terminus, the 967-residue chain is Leucine--tRNA ligase (967 aa).

The 'HIGH' region signature appears at 43 to 53; it reads PYLSGHLHVGH. A 'KMSKS' region motif is present at residues 650–654; it reads KMSKS. Residue lysine 653 coordinates ATP.

The protein belongs to the class-I aminoacyl-tRNA synthetase family.

The protein resides in the cytoplasm. It carries out the reaction tRNA(Leu) + L-leucine + ATP = L-leucyl-tRNA(Leu) + AMP + diphosphate. This Pyrococcus horikoshii (strain ATCC 700860 / DSM 12428 / JCM 9974 / NBRC 100139 / OT-3) protein is Leucine--tRNA ligase.